The primary structure comprises 100 residues: Small ribosomal subunit protein uS14 (100 aa).

It belongs to the universal ribosomal protein uS14 family. As to quaternary structure, part of the 30S ribosomal subunit. Contacts proteins S3 and S10.

Functionally, binds 16S rRNA, required for the assembly of 30S particles and may also be responsible for determining the conformation of the 16S rRNA at the A site. The protein is Small ribosomal subunit protein uS14 of Parasynechococcus marenigrum (strain WH8102).